A 417-amino-acid polypeptide reads, in one-letter code: MSLCSSFNVFASYSPKPKTIFKDSKFISQFQVKSSPLASTFHTNESSTSLKYKRARLKPISSLDSGISEIATSPSFRNKSPKDINVLVVGSTGYIGRFVVKEMIKRGFNVIAVAREKSGIRGKNDKEETLKQLQGANVCFSDVTELDVLEKSIENLGFGVDVVVSCLASRNGGIKDSWKIDYEATKNSLVAGKKFGAKHFVLLSAICVQKPLLEFQRAKLKFEAELMDLAEQQDSSFTYSIVRPTAFFKSLGGQVEIVKDGKPYVMFGDGKLCACKPISEQDLAAFIADCVLEENKINQVLPIGGPGKALTPLEQGEILFKILGREPKFLKVPIEIMDFVIGVLDSIAKIFPSVGEAAEFGKIGRYYAAESMLILDPETGEYSEEKTPSYGKDTLEDFFAKVIREGMAGQELGEQFF.

The transit peptide at 1 to 49 directs the protein to the chloroplast; that stretch reads MSLCSSFNVFASYSPKPKTIFKDSKFISQFQVKSSPLASTFHTNESSTS.

As to expression, highly expressed in leaves, stems and flower buds. Detected in roots.

The protein resides in the plastid. It localises to the chloroplast. It carries out the reaction protochlorophyllide a + NADP(+) = 3,8-divinyl protochlorophyllide a + NADPH + H(+). Its pathway is porphyrin-containing compound metabolism; chlorophyll biosynthesis. In terms of biological role, catalyzes the conversion of divinyl chlorophyllide to monovinyl chlorophyllide. Reduces the 8-vinyl group of the tetrapyrrole to an ethyl group using NADPH as the reductant. The best substrate is (3,8-divinyl)-chlorophyllide a (DV-Chlidea). Very low activity with (3,8-divinyl)-protochlorophyllide a (DV-Pchlidea) and (3,8-divinyl)-magnesium-protoporphyrin IX monomethyl ester (DV-MPE). No activity with (3,8-divinyl)-chlorophyllide b (DV-Chlideb), (3,8-divinyl)-magnesium-protoporphyrin IX (DV-Mg-Proto) and either (3,8-divinyl)-chlorophyll a (DV-Chla) or b (DV-Chlb). The polypeptide is Divinyl chlorophyllide a 8-vinyl-reductase, chloroplastic (DVR) (Arabidopsis thaliana (Mouse-ear cress)).